A 388-amino-acid chain; its full sequence is RNA binding motif protein, X-linked-like-1 (388 aa).

The region spanning 8 to 86 (GKLFIGGLNT…KAIKVEQATK (79 aa)) is the RRM domain. The span at 61-80 (DAKDVARDMNGKSLDGKAIK) shows a compositional bias: basic and acidic residues. The disordered stretch occupies residues 61–388 (DAKDVARDMN…SDRGGGQKQI (328 aa)). A Glycyl lysine isopeptide (Lys-Gly) (interchain with G-Cter in SUMO2) cross-link involves residue Lys80. Phosphoserine is present on Ser88. Over residues 148 to 161 (RGPPPRSGGPPPKR) the composition is skewed to pro residues. 2 stretches are compositionally biased toward basic and acidic residues: residues 191 to 212 (PRRE…DGYS) and 238 to 271 (YTYR…EYSD). The span at 320–332 (SRDSYSSSRSDLY) shows a compositional bias: low complexity. 2 stretches are compositionally biased toward basic and acidic residues: residues 333–344 (SSDRDRVGRQER) and 377–388 (SRSDRGGGQKQI).

Its subcellular location is the nucleus. RNA-binding protein which may be involved in pre-mRNA splicing. The chain is RNA binding motif protein, X-linked-like-1 (Rbmxl1) from Rattus norvegicus (Rat).